The primary structure comprises 260 residues: Uroplakin-1b (260 aa).

Over 1–15 the chain is Cytoplasmic; the sequence is MAKDDSTVRCFQGLL. A helical transmembrane segment spans residues 16–36; the sequence is IFGHVIVGMCGIALTAECIFF. Over 37 to 59 the chain is Extracellular; the sequence is VSDQHSLYPLLEATNNDDIFGAA. A helical membrane pass occupies residues 60 to 80; sequence WIGMFVGICLFCLSVLAIVGI. Over 81–86 the chain is Cytoplasmic; that stretch reads MKSNRK. A helical transmembrane segment spans residues 87–107; that stretch reads ILLAYFIMMFIVYGFEVASCI. Topologically, residues 108-229 are extracellular; sequence TAATQRDFFT…ELISGPMDRH (122 aa). A helical transmembrane segment spans residues 230–250; it reads AWGVAWFGFAILCWTFWVLLG. Over 251 to 260 the chain is Cytoplasmic; the sequence is TMFYWSRIEY.

The protein belongs to the tetraspanin (TM4SF) family. As to quaternary structure, heterodimer with uroplakin-3A (UPK3A) or uroplakin-3B (UPK3B). N-glycosylated with high-mannose oligosaccharides. Bladder epithelium.

It localises to the membrane. Its function is as follows. Component of the asymmetric unit membrane (AUM); a highly specialized biomembrane elaborated by terminally differentiated urothelial cells. May play an important role in normal bladder epithelial physiology, possibly in regulating membrane permeability of superficial umbrella cells or in stabilizing the apical membrane through AUM/cytoskeletal interactions. This is Uroplakin-1b (Upk1b) from Mus musculus (Mouse).